The following is a 633-amino-acid chain: MSDDFVVPTYEVGGSDSGSDQDISDIEEGSFNGISATPLPTADVEYVSEASPMDATASLGYLSGAEGANLYVAREGANYFNDAANKAVVLCLHSYEQLAISGVFKLQVMKGGITYNSIHYNCGLHTYDFWHPLSESIPPIAASFAADWEEHSYGLSPWLPADIKEEYECILRISEGSNIGDVGRLMAELGQLWTRHTGCTFSILRPEDYARPLILNKDWDNLQAELMIHHMNSEHDMRVMCIGGKNSGKSTLLRLLLQKFLHGNKSTTKATGVSHEADVVNYLDMDPGQPEYSAPDSISWSKLTSETLSLGQHLAQGHREMIQTTYIGSSTPQTWPEMYLTAMEHIIHKWEMEGQMNTALLNLPGWIKGFGITIINKAMELFKPTHIIFLTHGGKLISKELVVPNMFETMQKGKYKPMIYNLQAFTQHNIPGLPAQDPRYHAANIRSFRLLAHLHRLSEQSYYPGPLLSSPPLQVSFGSQGIMAFRFLQDPSSGYHQDDISAALQGCVVCLYHSKMPPDIDMCGVFPMLKHSADYTSMDFVTLALIHSIDVERKFMNIYIPGHVSGRVHSLKNNFVLVRGATDLPLCELYPQKLLSSSYRNREIPYVSFSKRKKYEYVWKIRKNVRRRGHYNK.

An ATP-binding site is contributed by 243–250 (GGKNSGKS).

It belongs to the Clp1 family. NOL9/GRC3 subfamily.

It is found in the nucleus. Its subcellular location is the nucleolus. Functionally, polynucleotide 5'-kinase involved in rRNA processing. The protein is Polynucleotide 5'-hydroxyl-kinase GRC3 (GRC3) of Eremothecium gossypii (strain ATCC 10895 / CBS 109.51 / FGSC 9923 / NRRL Y-1056) (Yeast).